We begin with the raw amino-acid sequence, 1201 residues long: MSDEEDIDESFEIEEDGISITDARGNSLKAQQIAGKERNLDPEADDLEVVVNFYEAGDGTFQLQLPKLTAVKPVDKVNDVLDFINFDKKVCDGIHSSIKLVSQRDQTGPAPFPKHKLTCAHCDWSFDNVMKLVRHRGVHKNVGVYMCQVCLTLFGHTYNLFMHWRTSCSQTSTTATDIEIQKAETPYLHRNVLNVLGSLNRASQYYCTGGYVFLPSDWCITNKEIVMEKDHMSSCHLCHLPVPNKFLEAHGNVHRGRFRIDGRIYGDYFCHICGTVFIEQDNLFKHWRLHCEEVIAYTPVDQYLSNTELATLAWLVLQTTISQADIECLRVSSSLITEKLAKEHAERHGIANSMHKYYHFPQEIWPLKTFVNLDLVNDAIPISGENSFKIKDPKRPVHIMNLLATACPGFYATGKTFNMICSTKKSESDTKKVYRVILRYTTEGSVIQSYDFTARSFPKLRVDSETPEGVFSHPLADFNVESNEAIVCHKCDSKKLTITFSTEVRLKYHLLRHSESRKDGYHCAICKIIVYNRSHEEHWINDCIPLQKLYRDQKDRECFDAEFAAKCASIIKKLRIRTLIRWKERANEDWVETKQTPDRIGEDFAIKFQVGTTALKTLMAGLEEHYKNAQARHEAYKYSEENFLPPLSTPVVVCFHCGTRCHYTLLHDHLDYCHYWPRNKRLVNEEFHKWKKNGCRNTWRVMKSVAEAMQIEVPFISEEQYSKILDYHTYFCNDTRYKVQDSINNWNDCSTIRDVDLSEKLSVAEIVQKGEDSVMAPEPDIIKNVYFPSARIITDNMLLRMTEINLNDVVQRDPITKEELTGKFKEVQDEQDAILFGDYRAVLRSKGIMVNSISDFVAPPDELAKAKASQESAGQESVDHRNRREREFIQQYMGKDLALEAAARENGRLVEVDEEAEDYELTPKELNARRLVERNRHREMCKTRCEHGEYDYEKFKARQVPINPAKMKERKYLTRVVHESGPDDDVCPDEPENNIIAFSPKYENSLSDFRISAIGFREKYLADDKKKRNGIPIRKMTEAQKGVALDYDTLMARHGGRPDVIMNPAGTVFVGGFVFDRKPTCQDNMQTVYVLRNGYAHRYRIYHCEDTNGIYKFVWPQEQSFDPDSLAKSARVRMVKQVKSPEHMIHHIEEIDESIGHNYRLNRKRRNSETREHELIELDTDDLNEPSTSDGRYSFGHHGYR.

C2H2-type zinc fingers lie at residues 117–139 (LTCA…RGVH), 145–168 (YMCQ…RTSC), 233–254 (SSCH…GNVH), 268–290 (YFCH…WRLH), 486–513 (IVCH…LLRH), 521–543 (YHCA…INDC), and 652–674 (VVCF…DYCH). A disordered region spans residues 1164–1201 (KRRNSETREHELIELDTDDLNEPSTSDGRYSFGHHGYR). Over residues 1167 to 1176 (NSETREHELI) the composition is skewed to basic and acidic residues.

As to quaternary structure, component of the SDC complex, which consists of sdc-1, sdc-2 and sdc-3. Within the complex, interacts with sdc-2 and sdc-3.

Its subcellular location is the nucleus. It is found in the chromosome. Its function is as follows. Embryonic transcription factor regulating downstream genes involved specifically in the sex determination and dosage compensation pathways, or regulating other genes involved in the coordinate control of both processes. Component of the SDC complex that functions in sex determination and in X chromosome dosage compensation specifically in hermaphrodite (XX) animals. Involved in the recruitment of the condensin I-like dosage compensation complex to the male sex-determining autosomal gene her-1, thereby contributing to its repression and initiating hermaphrodite sexual development. Similarly, might contribute to X-linked gene repression through recruitment of the dosage compensation complex to the X chromosomes in hermaphrodites. Seems to be involved in the depletion of histone H4 lysine 16 acetylation (H4K16ac) on dosage compensated X chromosomes. Plays a role in developmental rate and body fat regulation downstream of the TOR complex 2 pathway. The polypeptide is Zinc finger protein sdc-1 (sdc-1) (Caenorhabditis elegans).